The sequence spans 305 residues: UDP-3-O-acyl-N-acetylglucosamine deacetylase (305 aa).

Zn(2+) is bound by residues histidine 79, histidine 238, and aspartate 242. Histidine 265 acts as the Proton donor in catalysis.

The protein belongs to the LpxC family. The cofactor is Zn(2+).

The enzyme catalyses a UDP-3-O-[(3R)-3-hydroxyacyl]-N-acetyl-alpha-D-glucosamine + H2O = a UDP-3-O-[(3R)-3-hydroxyacyl]-alpha-D-glucosamine + acetate. Its pathway is glycolipid biosynthesis; lipid IV(A) biosynthesis; lipid IV(A) from (3R)-3-hydroxytetradecanoyl-[acyl-carrier-protein] and UDP-N-acetyl-alpha-D-glucosamine: step 2/6. Catalyzes the hydrolysis of UDP-3-O-myristoyl-N-acetylglucosamine to form UDP-3-O-myristoylglucosamine and acetate, the committed step in lipid A biosynthesis. This Shigella boydii serotype 18 (strain CDC 3083-94 / BS512) protein is UDP-3-O-acyl-N-acetylglucosamine deacetylase.